Here is a 1796-residue protein sequence, read N- to C-terminus: U3 small nucleolar RNA-associated protein 10 (1796 aa).

HEAT repeat units follow at residues 586-623 (LDLQ…SNAE), 656-692 (LLQE…SATG), 861-898 (DLTT…SDHS), 983-1021 (DTSV…TAPD), 1052-1089 (QTIK…AYEH), 1161-1198 (QPKP…VLSS), 1258-1295 (LSIG…QESN), 1302-1340 (TVLL…KYGK), 1344-1383 (EAVA…VLQD), 1492-1529 (SAVE…SALD), 1711-1748 (DHRK…TLGE), and 1752-1789 (EMLS…ILGE). Residues 881 to 901 (TTDSPATKRRRTSSSDHSRGV) are disordered.

This sequence belongs to the HEATR1/UTP10 family. In terms of assembly, component of the ribosomal small subunit (SSU) processome.

It is found in the nucleus. The protein resides in the nucleolus. Functionally, involved in nucleolar processing of pre-18S ribosomal RNA. Involved in ribosome biosynthesis. This is U3 small nucleolar RNA-associated protein 10 from Pyricularia oryzae (strain 70-15 / ATCC MYA-4617 / FGSC 8958) (Rice blast fungus).